The chain runs to 598 residues: Potassium voltage-gated channel subfamily A member 5 (598 aa).

A disordered region spans residues 1 to 89; it reads MEIALGPLEN…EEGEGDPGLS (89 aa). The segment at 1–195 is tetramerization domain; the sequence is MEIALGPLEN…FYQLGDEAME (195 aa). The Cytoplasmic portion of the chain corresponds to 1 to 231; the sequence is MEIALGPLEN…LIFEYPESSG (231 aa). Positions 60–69 are enriched in pro residues; sequence RPLPPQPPEL. Residue Lys205 forms a Glycyl lysine isopeptide (Lys-Gly) (interchain with G-Cter in SUMO) linkage. A helical membrane pass occupies residues 232 to 253; it reads SARAIAIVSVLVILISIITFCL. Residues 254-308 lie on the Extracellular side of the membrane; the sequence is ETLPEFKDERELLRHPPVPHQPPAAPALGANGSGAVAPASGSTVAPLLPRTLADP. Residues 309–330 form a helical membrane-spanning segment; that stretch reads FFIVETTCVIWFTFELLVRFFA. A lipid anchor (S-palmitoyl cysteine) is attached at Cys331. Topologically, residues 331–341 are cytoplasmic; it reads CPSKAEFSRNI. A helical transmembrane segment spans residues 342 to 362; that stretch reads MNIIDIVAIFPYFITLGTELA. Over 363–380 the chain is Extracellular; that stretch reads EQQPGGGGGGQNGQQAMS. A helical; Voltage-sensor membrane pass occupies residues 381–401; the sequence is LAILRVIRLVRVFRIFKLSRH. Residues 402-416 are Cytoplasmic-facing; sequence SKGLQILGKTLQASM. The interval 403–416 is S4-S5 linker; it reads KGLQILGKTLQASM. The chain crosses the membrane as a helical span at residues 417 to 438; the sequence is RELGLLIFFLFIGVILFSSAVY. The Extracellular segment spans residues 439–452; sequence FAEADNQGTHFSSI. Positions 453–464 form an intramembrane region, helical; the sequence is PDAFWWAVVTMT. The short motif at 465 to 470 is the Selectivity filter element; the sequence is TVGYGD. An intramembrane segment occupies 465-472; sequence TVGYGDMR. A helical membrane pass occupies residues 480–508; sequence IVGSLCAIAGVLTIALPVPVIVSNFNYFY. At 509–598 the chain is on the cytoplasmic side; sequence HRETDHEEQA…CLDTSRETDL (90 aa). The disordered stretch occupies residues 517–539; that stretch reads QAALKEEPGSQSRGTSLDAGGQR. Lys521 participates in a covalent cross-link: Glycyl lysine isopeptide (Lys-Gly) (interchain with G-Cter in SUMO). Residues 596-598 carry the PDZ-binding motif; sequence TDL.

The protein belongs to the potassium channel family. A (Shaker) (TC 1.A.1.2) subfamily. Kv1.5/KCNA5 sub-subfamily. As to quaternary structure, homotetramer and heterotetramer of potassium channel proteins. Interacts with DLG1, which enhances channel currents. Forms a ternary complex with DLG1 and CAV3. Interacts with KCNAB1. Interacts with UBE2I. Interacts with XIRP2; the interaction is required for normal action potential configuration in the heart. Post-translationally, glycosylated. Sumoylated on Lys-205, and Lys-521, preferentially with SUMO3. Sumoylation regulates the voltage sensitivity of the channel.

It is found in the cell membrane. It carries out the reaction K(+)(in) = K(+)(out). Its function is as follows. Voltage-gated potassium channel that mediates transmembrane potassium transport in excitable membranes. Forms tetrameric potassium-selective channels through which potassium ions pass in accordance with their electrochemical gradient. The channel alternates between opened and closed conformations in response to the voltage difference across the membrane. Can form functional homotetrameric channels and heterotetrameric channels that contain variable proportions of KCNA1, KCNA2, KCNA4, KCNA5, and possibly other family members as well; channel properties depend on the type of alpha subunits that are part of the channel. Channel properties are modulated by cytoplasmic beta subunits that regulate the subcellular location of the alpha subunits and promote rapid inactivation. Homotetrameric channels display rapid activation and slow inactivation. Required for normal electrical conduction including formation of the infranodal ventricular conduction system and normal action potential configuration, as a result of its interaction with XIRP2. May play a role in regulating the secretion of insulin in normal pancreatic islets. The protein is Potassium voltage-gated channel subfamily A member 5 (KCNA5) of Oryctolagus cuniculus (Rabbit).